Here is a 273-residue protein sequence, read N- to C-terminus: Large ribosomal subunit protein uL2c (273 aa).

Belongs to the universal ribosomal protein uL2 family. Part of the 50S ribosomal subunit.

It localises to the plastid. Its subcellular location is the apicoplast. This Eimeria tenella (Coccidian parasite) protein is Large ribosomal subunit protein uL2c (rpl2).